Reading from the N-terminus, the 647-residue chain is Macrolide export ATP-binding/permease protein MacB (647 aa).

The region spanning Leu-5–Ile-243 is the ABC transporter domain. Gly-41–Ser-48 lines the ATP pocket. The next 4 membrane-spanning stretches (helical) occupy residues Leu-272–Gly-292, Leu-522–Ile-542, Ile-576–Ile-596, and Pro-610–Leu-630.

This sequence belongs to the ABC transporter superfamily. Macrolide exporter (TC 3.A.1.122) family. In terms of assembly, homodimer. Part of the tripartite efflux system MacAB-TolC, which is composed of an inner membrane transporter, MacB, a periplasmic membrane fusion protein, MacA, and an outer membrane component, TolC. The complex forms a large protein conduit and can translocate molecules across both the inner and outer membranes. Interacts with MacA.

The protein localises to the cell inner membrane. Its function is as follows. Part of the tripartite efflux system MacAB-TolC. MacB is a non-canonical ABC transporter that contains transmembrane domains (TMD), which form a pore in the inner membrane, and an ATP-binding domain (NBD), which is responsible for energy generation. Confers resistance against macrolides. The chain is Macrolide export ATP-binding/permease protein MacB from Photorhabdus laumondii subsp. laumondii (strain DSM 15139 / CIP 105565 / TT01) (Photorhabdus luminescens subsp. laumondii).